A 407-amino-acid polypeptide reads, in one-letter code: Imidazolonepropionase (407 aa).

Fe(3+) contacts are provided by histidine 74 and histidine 76. The Zn(2+) site is built by histidine 74 and histidine 76. 4-imidazolone-5-propanoate-binding residues include arginine 83, tyrosine 146, and histidine 179. N-formimidoyl-L-glutamate is bound at residue tyrosine 146. Histidine 244 lines the Fe(3+) pocket. Histidine 244 contacts Zn(2+). Glutamine 247 is a binding site for 4-imidazolone-5-propanoate. Position 319 (aspartate 319) interacts with Fe(3+). Aspartate 319 is a binding site for Zn(2+). Positions 321 and 323 each coordinate N-formimidoyl-L-glutamate. 4-imidazolone-5-propanoate is bound at residue threonine 324.

The protein belongs to the metallo-dependent hydrolases superfamily. HutI family. Zn(2+) is required as a cofactor. Requires Fe(3+) as cofactor.

The protein localises to the cytoplasm. It carries out the reaction 4-imidazolone-5-propanoate + H2O = N-formimidoyl-L-glutamate. The protein operates within amino-acid degradation; L-histidine degradation into L-glutamate; N-formimidoyl-L-glutamate from L-histidine: step 3/3. In terms of biological role, catalyzes the hydrolytic cleavage of the carbon-nitrogen bond in imidazolone-5-propanoate to yield N-formimidoyl-L-glutamate. It is the third step in the universal histidine degradation pathway. This is Imidazolonepropionase from Salmonella heidelberg (strain SL476).